The following is a 319-amino-acid chain: MRNPQLNEHGELQHLLTLDGLPRQIITAILDTAAPFTEVAEREVKKLPLLRGKSVFNLFFENSTRTRTTFEIAAKRLSADVVNLNIATSSSNKGESLLDTVDNLSAMQADMFVVRHAASGAPFLIAQHLLATGRDHIRVVNAGDGRHAHPTQGLLDMYTIRHYKGDFTNLVVAIVGDVLHSRVARSQIAALTTLGVPEVRVIGPKTLLPTEVERMGVRVFHDMREGLKDVDVVMMLRLQNERMNGALLPTPQEYYKIWGLTAEKLALAKPDAIVMHPGPMNRGVEIDSAVADGTQAVILPQVTFGIAVRMAVMSMLGSH.

Positions 65 and 66 each coordinate carbamoyl phosphate. Lys93 contributes to the L-aspartate binding site. Residues Arg115, His149, and Gln152 each contribute to the carbamoyl phosphate site. Positions 182 and 237 each coordinate L-aspartate. Residues Gly278 and Pro279 each contribute to the carbamoyl phosphate site.

Belongs to the aspartate/ornithine carbamoyltransferase superfamily. ATCase family. In terms of assembly, heterododecamer (2C3:3R2) of six catalytic PyrB chains organized as two trimers (C3), and six regulatory PyrI chains organized as three dimers (R2).

The enzyme catalyses carbamoyl phosphate + L-aspartate = N-carbamoyl-L-aspartate + phosphate + H(+). It functions in the pathway pyrimidine metabolism; UMP biosynthesis via de novo pathway; (S)-dihydroorotate from bicarbonate: step 2/3. Catalyzes the condensation of carbamoyl phosphate and aspartate to form carbamoyl aspartate and inorganic phosphate, the committed step in the de novo pyrimidine nucleotide biosynthesis pathway. The chain is Aspartate carbamoyltransferase catalytic subunit from Azoarcus sp. (strain BH72).